The chain runs to 308 residues: tRNA dimethylallyltransferase (308 aa).

14 to 21 (GPTASGKT) serves as a coordination point for ATP. 16 to 21 (TASGKT) lines the substrate pocket. Interaction with substrate tRNA stretches follow at residues 39–42 (DSAL), 163–167 (QRLAR), and 244–249 (RCVGYR).

It belongs to the IPP transferase family. In terms of assembly, monomer. It depends on Mg(2+) as a cofactor.

The catalysed reaction is adenosine(37) in tRNA + dimethylallyl diphosphate = N(6)-dimethylallyladenosine(37) in tRNA + diphosphate. In terms of biological role, catalyzes the transfer of a dimethylallyl group onto the adenine at position 37 in tRNAs that read codons beginning with uridine, leading to the formation of N6-(dimethylallyl)adenosine (i(6)A). This chain is tRNA dimethylallyltransferase, found in Shewanella halifaxensis (strain HAW-EB4).